We begin with the raw amino-acid sequence, 592 residues long: Tegument protein US23 (592 aa).

Residues 407–491 (PRSLGDGEEE…NNVVPNVERR (85 aa)) form a disordered region. Positions 460-481 (ADDEEQGEDDDDSGAEPMEPEE) are enriched in acidic residues.

Belongs to the herpesviridae US22 family.

The protein resides in the virion tegument. This chain is Tegument protein US23 (US23), found in Homo sapiens (Human).